A 971-amino-acid polypeptide reads, in one-letter code: Translation initiation factor IF-2 (971 aa).

Basic and acidic residues predominate over residues Asp48 to Lys63. Disordered regions lie at residues Asp48–Ile86 and Asp101–Gln381. The span at Gly105–Ala114 shows a compositional bias: low complexity. Positions Glu121 to Ala181 are enriched in basic and acidic residues. A compositionally biased stretch (low complexity) spans Ala182–Thr203. The span at Asp210–Arg261 shows a compositional bias: basic and acidic residues. Pro residues predominate over residues Pro277 to Pro286. The span at Ala304–Ala326 shows a compositional bias: low complexity. Positions Ser356 to Lys369 are enriched in gly residues. A tr-type G domain is found at Pro471–Lys640. Positions Gly480–Thr487 are G1. Position 480-487 (Gly480–Thr487) interacts with GTP. The tract at residues Gly505–His509 is G2. The G3 stretch occupies residues Asp526–Gly529. Residues Asp526–His530 and Asn580–Asp583 contribute to the GTP site. The G4 stretch occupies residues Asn580–Asp583. Residues Ser616–Lys618 are G5.

Belongs to the TRAFAC class translation factor GTPase superfamily. Classic translation factor GTPase family. IF-2 subfamily.

It localises to the cytoplasm. Its function is as follows. One of the essential components for the initiation of protein synthesis. Protects formylmethionyl-tRNA from spontaneous hydrolysis and promotes its binding to the 30S ribosomal subunits. Also involved in the hydrolysis of GTP during the formation of the 70S ribosomal complex. This chain is Translation initiation factor IF-2, found in Burkholderia orbicola (strain MC0-3).